Reading from the N-terminus, the 237-residue chain is Ubiquinone biosynthesis O-methyltransferase (237 aa).

Positions 39, 59, 80, and 124 each coordinate S-adenosyl-L-methionine.

This sequence belongs to the methyltransferase superfamily. UbiG/COQ3 family.

The catalysed reaction is a 3-demethylubiquinol + S-adenosyl-L-methionine = a ubiquinol + S-adenosyl-L-homocysteine + H(+). The enzyme catalyses a 3-(all-trans-polyprenyl)benzene-1,2-diol + S-adenosyl-L-methionine = a 2-methoxy-6-(all-trans-polyprenyl)phenol + S-adenosyl-L-homocysteine + H(+). Its pathway is cofactor biosynthesis; ubiquinone biosynthesis. Functionally, O-methyltransferase that catalyzes the 2 O-methylation steps in the ubiquinone biosynthetic pathway. The protein is Ubiquinone biosynthesis O-methyltransferase of Vibrio atlanticus (strain LGP32) (Vibrio splendidus (strain Mel32)).